Here is a 172-residue protein sequence, read N- to C-terminus: MORN repeat-containing protein 5 (172 aa).

MORN repeat units follow at residues 8–30 (YIGE…TETK), 31–53 (YIGE…NGSR), and 54–75 (FDAV…DGLQ).

The protein resides in the cell projection. It localises to the cilium. It is found in the flagellum. This Bos taurus (Bovine) protein is MORN repeat-containing protein 5 (MORN5).